A 70-amino-acid chain; its full sequence is Cold shock-like protein CspI (70 aa).

The CSD domain maps to 7–67 (GLVKWFNPEK…GPKGPAAVHV (61 aa)).

The protein localises to the cytoplasm. This is Cold shock-like protein CspI (cspI) from Escherichia coli O6:H1 (strain CFT073 / ATCC 700928 / UPEC).